We begin with the raw amino-acid sequence, 612 residues long: 1,8-cineole synthase, chloroplastic (612 aa).

The N-terminal 52 residues, 1–52 (MALVSGAPLASRSCLNKSLISSTHELKPLRRTILPTLRWKSATPSINMCLTT), are a transit peptide targeting the chloroplast. Mg(2+) is bound by residues Asp-363, Asp-367, and Asp-515. The short motif at 363–367 (DDIYD) is the DDXXD motif element.

Belongs to the terpene synthase family. Tpsd subfamily. The cofactor is Mg(2+). Requires Mn(2+) as cofactor.

It is found in the plastid. It localises to the chloroplast. The catalysed reaction is (2E)-geranyl diphosphate + H2O = 1,8-cineole + diphosphate. It participates in terpene metabolism; oleoresin biosynthesis. Terpene synthase (TPS) involved in the biosynthesis of monoterpene natural products included in conifer oleoresin secretions and volatile emissions; these compounds contribute to biotic and abiotic stress defense against herbivores and pathogens. Catalyzes the conversion of (2E)-geranyl diphosphate (GPP) to 1,8-cineole. This chain is 1,8-cineole synthase, chloroplastic, found in Picea engelmannii x Picea glauca (Hybrid white spruce).